The following is a 324-amino-acid chain: uncharacterized protein (324 aa).

The protein belongs to the mgp1/MG371 family.

This is an uncharacterized protein from Mycoplasma genitalium (strain ATCC 33530 / DSM 19775 / NCTC 10195 / G37) (Mycoplasmoides genitalium).